The sequence spans 41 residues: FDGRNAAVNERAPWMVVTATTNCCGYTGPACHPCLCTQSCG.

Residues 1–11 (FDGRNAAVNER) constitute a propeptide that is removed on maturation. Position 13 is a 4-hydroxyproline (P13). T18 and T20 each carry an O-linked (HexNAc...) threonine glycan. 4-hydroxyproline occurs at positions 29 and 33. C40 bears the Cysteine amide mark.

This sequence belongs to the conotoxin A superfamily. Post-translationally, contains 3 disulfide bonds. In terms of tissue distribution, expressed by the venom duct.

It is found in the secreted. Functionally, probable neurotoxin with ion channel inhibitor activity. The sequence is that of Conotoxin Ac4.2 from Conus achatinus (Little frog cone).